We begin with the raw amino-acid sequence, 886 residues long: Inter-alpha-trypsin inhibitor heavy chain H3 (886 aa).

A signal peptide spans 1–18; the sequence is MWWPYLVLALLSGLEASG. Positions 19 to 30 are excised as a propeptide; it reads FPRSPLRLLGKR. The region spanning 26–155 is the VIT domain; it reads LLGKRSLPEG…KVTFELTYEE (130 aa). An N-linked (GlcNAc...) asparagine glycan is attached at Asn-88. The VWFA domain occupies 279 to 439; the sequence is PKNIVFVIDI…YNFLETMALE (161 aa). Residue Asn-577 is glycosylated (N-linked (GlcNAc...) asparagine). Asp-646 carries the aspartate 1-(chondroitin 4-sulfate)-ester modification. The propeptide occupies 647–886; that stretch reads PHFIIQVPGK…HTDYIVPSLF (240 aa).

This sequence belongs to the ITIH family. I-alpha-I plasma protease inhibitors are assembled from one or two heavy chains (HC) and one light chain, bikunin. Pre-alpha-inhibitor (P-alpha-I) is composed of ITIH3/HC3 and bikunin. Post-translationally, heavy chains are linked to bikunin via chondroitin 4-sulfate esterified to the alpha-carboxyl of the C-terminal aspartate after propeptide cleavage.

The protein resides in the secreted. May act as a carrier of hyaluronan in serum or as a binding protein between hyaluronan and other matrix protein, including those on cell surfaces in tissues to regulate the localization, synthesis and degradation of hyaluronan which are essential to cells undergoing biological processes. In Mesocricetus auratus (Golden hamster), this protein is Inter-alpha-trypsin inhibitor heavy chain H3 (ITIH3).